A 319-amino-acid chain; its full sequence is MMEEIPASYFKIEEFQFESGEKIQEAPVEYRTTGKPSLDDMGVIDNAVIYIHGWSGDCSSVRRIAALTEPGGALENFFVISISSLGSPGSASPSTTAMGKDFPEYTILDMVNFQRQFLDEKFGIRKVRGVIGTSMGGFQALQWAAEYPDEMEFLIPLVTSWQVRGINYALFSYMNHLIEGDPEFRAGTRPERALSLASMLMYLHGLSREYYQGLENAELESSMMDMGSEGALMDPYDVIWRNRAAMKHDLSGKLESIRARTLIFGVNQDRYFPPELDTIPMAQLIPKAELVLFDSECGHLGVNEIGKYNEIIVSFIGGD.

The AB hydrolase-1 domain occupies 46–301; it reads NAVIYIHGWS…LFDSECGHLG (256 aa). Asp269 is an active-site residue.

The protein belongs to the AB hydrolase superfamily. MetX family. In terms of assembly, homodimer.

Its subcellular location is the cytoplasm. The protein is Probable acyltransferase (metX) of Methanothermobacter thermautotrophicus (strain ATCC 29096 / DSM 1053 / JCM 10044 / NBRC 100330 / Delta H) (Methanobacterium thermoautotrophicum).